The chain runs to 233 residues: MDSASDAGERRPARAALRVLSLIEQRVVAVLVEKQHTVSDSYPLSLNTLLLGCNQKTAREPVINATESEVLAAVDELKRLSLVIEVSGSRVARYEHNLQRVLGVPSQAAAILTLLMLRGPQTAAELRANTERLHRFADISSVEGFLDELALREPPLVVKLPRAPGSREARWAQLLGGPPEVSVAAPAGAAPEDLVTAGEIQALRANQHRLQAEVVMLRAQLHRLAAELGVDLS.

It belongs to the UPF0502 family.

This chain is UPF0502 protein Mpe_A1449, found in Methylibium petroleiphilum (strain ATCC BAA-1232 / LMG 22953 / PM1).